We begin with the raw amino-acid sequence, 282 residues long: tRNA (guanine-N(7)-)-methyltransferase (282 aa).

Positions 1–29 are disordered; sequence MPHAPAKRQKREEYKNALHEDESNAALPK. A compositionally biased stretch (basic and acidic residues) spans 10-22; it reads KREEYKNALHEDE. S-adenosyl-L-methionine contacts are provided by residues glycine 104, 153–154, and cysteine 173; that span reads NT. Aspartate 176 is an active-site residue. Position 255–257 (255–257) interacts with S-adenosyl-L-methionine; sequence TEE.

This sequence belongs to the class I-like SAM-binding methyltransferase superfamily. TrmB family. In terms of assembly, forms a complex with TRM82.

It is found in the nucleus. The enzyme catalyses guanosine(46) in tRNA + S-adenosyl-L-methionine = N(7)-methylguanosine(46) in tRNA + S-adenosyl-L-homocysteine. It functions in the pathway tRNA modification; N(7)-methylguanine-tRNA biosynthesis. Catalyzes the formation of N(7)-methylguanine at position 46 (m7G46) in tRNA. This chain is tRNA (guanine-N(7)-)-methyltransferase, found in Phaeosphaeria nodorum (strain SN15 / ATCC MYA-4574 / FGSC 10173) (Glume blotch fungus).